The chain runs to 210 residues: Vacuolar protein sorting-associated protein 28 homolog 2 (210 aa).

The 99-residue stretch at 1–99 (MMEVKLWNDK…VTSGLPATVE (99 aa)) folds into the VPS28 N-terminal domain. Positions 109–205 (SNSASIVAEC…SSYNSFMAAL (97 aa)) constitute a VPS28 C-terminal domain.

Belongs to the VPS28 family. As to quaternary structure, component of the endosomal sorting required for transport complex I (ESCRT-I), composed of ELC, VPS28 and VPS37. Interacts with ELC.

The protein localises to the endosome. Its function is as follows. Component of the ESCRT-I complex (endosomal sorting complex required for transport I), a regulator of vesicular trafficking process. Required for the sorting of endocytic ubiquitinated cargos into multivesicular bodies (MVBs). Mediates the association to the ESCRT-0 complex. In Arabidopsis thaliana (Mouse-ear cress), this protein is Vacuolar protein sorting-associated protein 28 homolog 2 (VPS28-2).